A 147-amino-acid polypeptide reads, in one-letter code: Large ribosomal subunit protein bL9 (147 aa).

The protein belongs to the bacterial ribosomal protein bL9 family.

In terms of biological role, binds to the 23S rRNA. This Bacteroides fragilis (strain ATCC 25285 / DSM 2151 / CCUG 4856 / JCM 11019 / LMG 10263 / NCTC 9343 / Onslow / VPI 2553 / EN-2) protein is Large ribosomal subunit protein bL9.